A 515-amino-acid polypeptide reads, in one-letter code: Maturase K (515 aa).

This sequence belongs to the intron maturase 2 family. MatK subfamily.

It localises to the plastid. The protein localises to the chloroplast. Functionally, usually encoded in the trnK tRNA gene intron. Probably assists in splicing its own and other chloroplast group II introns. This Zingiber mioga (Myoga ginger) protein is Maturase K.